Here is a 209-residue protein sequence, read N- to C-terminus: Octanoyltransferase (209 aa).

Residues 28–203 (NATPETLLLL…RFQGLLDEWL (176 aa)) enclose the BPL/LPL catalytic domain. Substrate is bound by residues 66-73 (RGGDVTFH), 133-135 (AIG), and 146-148 (GFA). Catalysis depends on Cys-164, which acts as the Acyl-thioester intermediate.

This sequence belongs to the LipB family.

It localises to the cytoplasm. The catalysed reaction is octanoyl-[ACP] + L-lysyl-[protein] = N(6)-octanoyl-L-lysyl-[protein] + holo-[ACP] + H(+). It participates in protein modification; protein lipoylation via endogenous pathway; protein N(6)-(lipoyl)lysine from octanoyl-[acyl-carrier-protein]: step 1/2. Functionally, catalyzes the transfer of endogenously produced octanoic acid from octanoyl-acyl-carrier-protein onto the lipoyl domains of lipoate-dependent enzymes. Lipoyl-ACP can also act as a substrate although octanoyl-ACP is likely to be the physiological substrate. The chain is Octanoyltransferase from Pelobacter propionicus (strain DSM 2379 / NBRC 103807 / OttBd1).